A 61-amino-acid polypeptide reads, in one-letter code: Protein translocase subunit SecE (61 aa).

A helical membrane pass occupies residues 38–58 (GIGMILIGTIGMIIRIIGYLV).

This sequence belongs to the SecE/SEC61-gamma family. In terms of assembly, component of the Sec protein translocase complex. Heterotrimer consisting of SecY (alpha), SecG (beta) and SecE (gamma) subunits. The heterotrimers can form oligomers, although 1 heterotrimer is thought to be able to translocate proteins. Interacts with the ribosome. May interact with SecDF, and other proteins may be involved.

Its subcellular location is the cell membrane. Essential subunit of the Sec protein translocation channel SecYEG. Clamps together the 2 halves of SecY. May contact the channel plug during translocation. The sequence is that of Protein translocase subunit SecE from Thermococcus kodakarensis (strain ATCC BAA-918 / JCM 12380 / KOD1) (Pyrococcus kodakaraensis (strain KOD1)).